The sequence spans 578 residues: E3 ubiquitin-protein ligase Praja-1 (578 aa).

The interval 1-298 is disordered; that stretch reads MSHQERIASQ…KVPRRRRTMA (298 aa). Composition is skewed to basic and acidic residues over residues 57–67 and 107–116; these read DYSRYPPREYR and KFKDDPEKGA. Residues 151 to 163 are compositionally biased toward polar residues; it reads SKQNGSSASQISS. Threonine 231 is subject to Phosphothreonine. 2 stretches are compositionally biased toward basic and acidic residues: residues 243-264 and 273-290; these read RWRD…RGRG and RYAE…ADKV. 2 positions are modified to phosphoserine: serine 317 and serine 319. Residues 332–397 form a disordered region; the sequence is RSREQPQSSS…QASLEEGEIP (66 aa). Low complexity predominate over residues 359-373; sequence AGAGSLASAGSNGSG. The segment covering 377–395 has biased composition (acidic residues); it reads EVQDPSLQEEEQASLEEGE. The RING-type zinc finger occupies 530–571; that stretch reads CPICCSEYVKGEVATELPCHHYFHKPCVSIWLQKSGTCPVCR.

Binds ubiquitin-conjugating enzymes (E2s). Binds, in vitro and in vivo, the MAGE conserved domain of MAGED1. Binds weakly Necdin, in vitro. Interacts with UBE2D2. Post-translationally, substrate for E2-dependent ubiquitination. Expressed in brain, liver, kidney. Highest levels in brain where it is found in many regions including cortical and subcortical areas and in neurons of the amygdala. Weak expression also found in testis. Also expressed in developing embryo.

The enzyme catalyses S-ubiquitinyl-[E2 ubiquitin-conjugating enzyme]-L-cysteine + [acceptor protein]-L-lysine = [E2 ubiquitin-conjugating enzyme]-L-cysteine + N(6)-ubiquitinyl-[acceptor protein]-L-lysine.. Its function is as follows. Has E2-dependent E3 ubiquitin-protein ligase activity. Ubiquitinates MAGED1 antigen leading to its subsequent degradation by proteasome. May be involved in protein sorting. In Mus musculus (Mouse), this protein is E3 ubiquitin-protein ligase Praja-1 (Pja1).